Here is a 367-residue protein sequence, read N- to C-terminus: Protein SUPPRESSOR OF FRI 4 (367 aa).

A BED-type zinc finger spans residues 7–66; the sequence is RATEKVWCYYCDREFDDEKILVQHQKAKHFKCHVCHKKLSTASGMVIHVLQVHKENVTKV. Zn(2+) contacts are provided by C38, C41, H54, and H59. The tract at residues 246–309 is disordered; the sequence is PFSAPLPVGG…PPVIANKAPS (64 aa). The span at 273-295 shows a compositional bias: polar residues; it reads PNNSIPGGTNAHSYASGPNTSGP.

Homodimer. Component of the transcription activator complex FRI-C composed of FRI, FRL1, SUF4, FLX and FES1. Interacts with LD, ASHH2, FRL1, (via C-terminus) with FRI (via C-terminus), and with SWC6, a component of the SWR1 chromatin-remodeling complex. Binds to MED18 to regulate flowering time; recruits MED18 to FLC promoter. In terms of tissue distribution, expressed in root, shoot apex, leaves, stem and flowers. Expressed in expanding leaves, in the vasculature of fully expanded leaves, in the inflorescence, throughout young floral primordia, in the carpels of older flowers and in fertilized ovules.

Its subcellular location is the nucleus. Sequence-specific DNA binding factor that recognizes the 5'-CCAAATTTTAAGTTT-3' sequence. Recruits the FRI-C complex to the FLC promoter. Required for FRI-mediated FLC activation, but has no effect on the expression of MAF1, MAF2, MAF3, MAF5, UFC and CO. Dispensable for the reactivation of FLC in early embryogenesis, but required to maintain high levels of FLC expression in later embryonic and vegetative development. The chain is Protein SUPPRESSOR OF FRI 4 from Arabidopsis thaliana (Mouse-ear cress).